Reading from the N-terminus, the 158-residue chain is Putative ribosomal RNA large subunit methyltransferase H (158 aa).

S-adenosyl-L-methionine contacts are provided by residues leucine 76, glycine 107, and 126 to 131 (LSRMTF).

It belongs to the RNA methyltransferase RlmH family.

The protein resides in the cytoplasm. The enzyme catalyses pseudouridine(1915) in 23S rRNA + S-adenosyl-L-methionine = N(3)-methylpseudouridine(1915) in 23S rRNA + S-adenosyl-L-homocysteine + H(+). Its function is as follows. Specifically methylates the pseudouridine at position 1915 (m3Psi1915) in 23S rRNA. The sequence is that of Putative ribosomal RNA large subunit methyltransferase H from Methanocorpusculum labreanum (strain ATCC 43576 / DSM 4855 / Z).